The chain runs to 340 residues: Methionine import ATP-binding protein MetN (340 aa).

The ABC transporter domain maps to 5–243; the sequence is IEFRGVTKSF…PQTTTARRFV (239 aa). Position 40–47 (40–47) interacts with ATP; the sequence is GYSGAGKS.

It belongs to the ABC transporter superfamily. Methionine importer (TC 3.A.1.24) family. In terms of assembly, the complex is composed of two ATP-binding proteins (MetN), two transmembrane proteins (MetI) and a solute-binding protein (MetQ).

Its subcellular location is the cell membrane. It carries out the reaction L-methionine(out) + ATP + H2O = L-methionine(in) + ADP + phosphate + H(+). The catalysed reaction is D-methionine(out) + ATP + H2O = D-methionine(in) + ADP + phosphate + H(+). In terms of biological role, part of the ABC transporter complex MetNIQ involved in methionine import. Responsible for energy coupling to the transport system. The protein is Methionine import ATP-binding protein MetN of Leifsonia xyli subsp. xyli (strain CTCB07).